We begin with the raw amino-acid sequence, 264 residues long: Sexual differentiation protein ste4 (264 aa).

An SAM domain is found at 11–73 (WNNEAVCNWI…LSAIQSMKKQ (63 aa)). Residues 111–139 (LEKRVEYLETENTKLVKTLNSLNSEFLQL) are leucine-zipper. The Ras-associating domain occupies 176–264 (GSFDLEVNDS…PSFVLSRRSC (89 aa)).

As to quaternary structure, homodimer or heterodimer with another leucine-zipper protein.

Functionally, essential for mating and meiosis. The chain is Sexual differentiation protein ste4 (ste4) from Schizosaccharomyces pombe (strain 972 / ATCC 24843) (Fission yeast).